The primary structure comprises 178 residues: NADH-quinone oxidoreductase subunit B (178 aa).

[4Fe-4S] cluster contacts are provided by Cys45, Cys46, Cys111, and Cys140.

The protein belongs to the complex I 20 kDa subunit family. In terms of assembly, NDH-1 is composed of 15 different subunits. Subunits NuoB, C, D, E, F, and G constitute the peripheral sector of the complex. [4Fe-4S] cluster is required as a cofactor.

The protein localises to the cell membrane. The enzyme catalyses a quinone + NADH + 5 H(+)(in) = a quinol + NAD(+) + 4 H(+)(out). NDH-1 shuttles electrons from NADH, via FMN and iron-sulfur (Fe-S) centers, to quinones in the respiratory chain. The immediate electron acceptor for the enzyme in this species is believed to be a menaquinone. Couples the redox reaction to proton translocation (for every two electrons transferred, four hydrogen ions are translocated across the cytoplasmic membrane), and thus conserves the redox energy in a proton gradient. The chain is NADH-quinone oxidoreductase subunit B from Deinococcus deserti (strain DSM 17065 / CIP 109153 / LMG 22923 / VCD115).